We begin with the raw amino-acid sequence, 81 residues long: Short neurotoxin 1 (81 aa).

The signal sequence occupies residues 1–21 (MKTLLLSPVVVTIVCLDLGYT). Cystine bridges form between cysteine 24–cysteine 43, cysteine 38–cysteine 60, cysteine 62–cysteine 73, and cysteine 74–cysteine 79.

This sequence belongs to the three-finger toxin family. Short-chain subfamily. Type I alpha-neurotoxin sub-subfamily. Expressed by the venom gland.

The protein localises to the secreted. In terms of biological role, binds to muscle nicotinic acetylcholine receptor (nAChR) and inhibit acetylcholine from binding to the receptor, thereby impairing neuromuscular transmission. The protein is Short neurotoxin 1 of Hydrophis peronii (Spiny-headed seasnake).